The following is a 359-amino-acid chain: Malonyl-CoA reductase (359 aa).

Residue 16–19 (TGLV) participates in NADP(+) binding. Cys153 acts as the Acyl-thioester intermediate in catalysis. 183 to 184 (SG) is an NADP(+) binding site. The active-site Proton acceptor is His248. 335-336 (NT) contributes to the NADP(+) binding site.

It belongs to the aspartate-semialdehyde dehydrogenase family. Homodimer and possibly a tetramer. Mg(2+) serves as cofactor. Requires Mn(2+) as cofactor.

The enzyme catalyses 3-oxopropanoate + NADP(+) + CoA = malonyl-CoA + NADPH + H(+). Activated by dithioerythritol (5 mM) and inhibited by the thiol-blocking agent iodoacetamide (0.1 mM). In terms of biological role, catalyzes the reduction of malonyl-CoA to malonate semialdehyde, a key step in the 3-hydroxypropanoate and the 3-hydroxypropanoate/4-hydroxybutyrate cycles. Can also use succinyl-CoA and succinate semialdehyde as substrates but at a lower rate than malonyl-CoA. The sequence is that of Malonyl-CoA reductase (mcr) from Sulfurisphaera tokodaii (strain DSM 16993 / JCM 10545 / NBRC 100140 / 7) (Sulfolobus tokodaii).